The primary structure comprises 288 residues: Syntaxin-1A (288 aa).

Basic and acidic residues predominate over residues 1 to 13 (MKDRTQELRTAKD). Positions 1–20 (MKDRTQELRTAKDSDDDDDV) are disordered. Residues 1-265 (MKDRTQELRT…KYQSKARRKK (265 aa)) are Cytoplasmic-facing. Phosphoserine is present on residues Ser-14, Ser-64, and Ser-95. Positions 68–109 (DEKTKEELEELMSDIKKTANKVRSKLKSIEQSIEQEEGLNRS) form a coiled coil. Ser-188 is subject to Phosphoserine; by DAPK1. In terms of domain architecture, t-SNARE coiled-coil homology spans 192–254 (LSEIETRHSE…ERAVSDTKKA (63 aa)). Residues Lys-252, Lys-253, and Lys-256 each participate in a glycyl lysine isopeptide (Lys-Gly) (interchain with G-Cter in SUMO) cross-link. Residues 266-286 (IMIIICCVILGIIIASTIGGI) form a helical; Anchor for type IV membrane protein membrane-spanning segment. Residues 287 to 288 (FG) are Extracellular-facing.

It belongs to the syntaxin family. As to quaternary structure, part of the SNARE core complex containing SNAP25, VAMP2 and STX1A; this complex constitutes the basic catalytic machinery of the complex neurotransmitter release apparatus. The SNARE complex interacts with CPLX1. Interacts with STXBP1. The interaction with STXBP1 promotes assembly of the SNARE complex. Interacts (via C-terminus) with KCNB1 (via C-terminus); the interaction increases in a calcium-dependent manner and induces a pore-independent enhancement of exocytosis in neuroendocrine cells, chromaffin cells, pancreatic beta cells and from the soma of dorsal root ganglia (DRG) neurons. Interacts with SYTL4. Interacts with STXBP6. Interacts with PLCL1 (via C2 domain). Interacts with OTOF. Interacts with LGI3. Interacts (via the H3 domain) with SLC6A4 (via the N-terminus); this interaction regulates SLC4A6 channel conductance in thalamocortical neurons. Interacts with SYT6 and SYT8; the interaction is Ca(2+)-dependent. Interacts with VAMP8. Interacts with SNAP23. Interacts with VAPA and SYBU. Interacts with PRRT2. Interacts with SEPT8. Interacts with STXBP5L. Interacts with synaptotagmin-1/SYT1. Interacts with SEPTIN5; in the cerebellar cortex. Interacts with SEPTIN4; in the striatum. Post-translationally, phosphorylated by CK2. Phosphorylation at Ser-188 by DAPK1 significantly decreases its interaction with STXBP1. In terms of processing, phosphorylated by CK2. Phosphorylation at Ser-188 by DAPK1 significantly decreases its interaction with STXBP1. Sumoylated, sumoylation is required for regulation of synaptic vesicle endocytosis. Expressed in the striatum (at protein level). Expressed in the ileum.

Its subcellular location is the cytoplasmic vesicle. The protein resides in the secretory vesicle. It is found in the synaptic vesicle membrane. The protein localises to the synapse. It localises to the synaptosome. Its subcellular location is the cell membrane. Plays an essential role in hormone and neurotransmitter calcium-dependent exocytosis and endocytosis. Part of the SNARE (Soluble NSF Attachment Receptor) complex composed of SNAP25, STX1A and VAMP2 which mediates the fusion of synaptic vesicles with the presynaptic plasma membrane. STX1A and SNAP25 are localized on the plasma membrane while VAMP2 resides in synaptic vesicles. The pairing of the three SNAREs from the N-terminal SNARE motifs to the C-terminal anchors leads to the formation of the SNARE complex, which brings membranes into close proximity and results in final fusion. Participates in the calcium-dependent regulation of acrosomal exocytosis in sperm. Also plays an important role in the exocytosis of hormones such as insulin or glucagon-like peptide 1 (GLP-1). The sequence is that of Syntaxin-1A (Stx1a) from Mus musculus (Mouse).